The following is a 613-amino-acid chain: MSEQFTRREFLQSACITMGALAVSTSGVDRAFASSSLPINTSGIPSCDVLIIGSGAAGLRAAVAARKKDPSLNVIVVSKVMPTRSATTMAEGGINGVIDFSEGDSFALHAYDTVKGGDFLVDQDTAMKFAEHAGEAIHELDYIGMPFSRDKNGKVDKRYAGGASKIRCNFSADKTGHILTHTCLDDALKNGVKFLMDHQLLDIGVDNGRCEGVVLRDIRTGTIAPVRAKSVVLATGGYTRVFWNRTSTPYIATGDGAASAMRAGVAFKDPEMLQFHPTGVCHGGVLITEAARGEGGILLNNQGERFMKNYAKKMELAPRDIVSRSIETEIREGRAFGKGMEAYVLLDVTHLGKEKIMRNLPQIRHIGLLFENMDLVEKPIAIRPTAHYSMGGIDVMGLESMSTAIPGLFAAGEAACVSIHGANRLGGNSLCDTVVTGKIAGTNAASFASSAGFGSGTHLHDLTLKWMSRFKEVANGKGEVNEMYAIREELGAVNWDNMGVFRTESRLVALEDKHNELQARYDALRIPNTNPVFNTAFTEYVELGNILLASRAARMGAEARKESRGSHYREDYIKRDDANFLKHSMVTMDSNGKLHLGWKDVVVTQFKIEERKY.

The tat-type signal signal peptide spans 1-33 (MSEQFTRREFLQSACITMGALAVSTSGVDRAFA). FAD contacts are provided by residues 53–58 (GSGAAG), 78–93 (SKVM…AEGG), and Asp-255. Substrate-binding residues include His-276 and Thr-288. Arg-319 acts as the Proton acceptor in catalysis. His-387 provides a ligand contact to substrate. Residue Glu-413 participates in FAD binding. Position 424 (Arg-424) interacts with substrate. 429–430 (SL) provides a ligand contact to FAD.

This sequence belongs to the FAD-dependent oxidoreductase 2 family. FRD/SDH subfamily. As to quaternary structure, the MFR complex is composed of three subunits: a flavoprotein (SdhA), an iron-sulfur protein (SdhB), and one hydrophobic anchor protein (SdhE). FAD is required as a cofactor. Predicted to be exported by the Tat system. The position of the signal peptide cleavage has not been experimentally proven.

It is found in the periplasm. The protein localises to the cell membrane. It catalyses the reaction 8-methylmenaquinone-6 + succinate = 8-methylmenaquinol-6 + fumarate. Functionally, flavoprotein subunit of 8-methylmenaquinol:fumarate reductase (MFR), that catalyzes the reduction of fumarate using 8-methylmenaquinol-6 as electron donor. The complex shows no succinate oxidation activity. Is involved in anaerobic metabolism. SdhA contains the dicarboxylate reduction site. This Wolinella succinogenes (strain ATCC 29543 / DSM 1740 / CCUG 13145 / JCM 31913 / LMG 7466 / NCTC 11488 / FDC 602W) (Vibrio succinogenes) protein is 8-methylmenaquinol:fumarate reductase flavoprotein subunit.